Consider the following 255-residue polypeptide: tRNA (guanine-N(1)-)-methyltransferase (255 aa).

S-adenosyl-L-methionine contacts are provided by residues glycine 117 and 137-142; that span reads IGDYVL.

The protein belongs to the RNA methyltransferase TrmD family. In terms of assembly, homodimer.

The protein localises to the cytoplasm. It catalyses the reaction guanosine(37) in tRNA + S-adenosyl-L-methionine = N(1)-methylguanosine(37) in tRNA + S-adenosyl-L-homocysteine + H(+). Functionally, specifically methylates guanosine-37 in various tRNAs. This Chromobacterium violaceum (strain ATCC 12472 / DSM 30191 / JCM 1249 / CCUG 213 / NBRC 12614 / NCIMB 9131 / NCTC 9757 / MK) protein is tRNA (guanine-N(1)-)-methyltransferase.